The sequence spans 167 residues: 2-amino-4-hydroxy-6-hydroxymethyldihydropteridine pyrophosphokinase (167 aa).

It belongs to the HPPK family.

It carries out the reaction 6-hydroxymethyl-7,8-dihydropterin + ATP = (7,8-dihydropterin-6-yl)methyl diphosphate + AMP + H(+). Its pathway is cofactor biosynthesis; tetrahydrofolate biosynthesis; 2-amino-4-hydroxy-6-hydroxymethyl-7,8-dihydropteridine diphosphate from 7,8-dihydroneopterin triphosphate: step 4/4. Functionally, catalyzes the transfer of pyrophosphate from adenosine triphosphate (ATP) to 6-hydroxymethyl-7,8-dihydropterin, an enzymatic step in folate biosynthesis pathway. The chain is 2-amino-4-hydroxy-6-hydroxymethyldihydropteridine pyrophosphokinase (folK) from Bacillus subtilis (strain 168).